The following is a 400-amino-acid chain: General L-amino acid transport system permease protein AapQ (400 aa).

The next 8 helical transmembrane spans lie at 29–49 (SIFY…WVAH), 100–120 (LLVA…IGIG), 142–162 (IPPL…LPQP), 188–208 (TGMI…IIIA), 225–245 (VWTA…VSGF), 264–284 (VVGP…ASFI), 340–360 (NSSL…GTIL), and 367–387 (IEIV…TSLF). The 293-residue stretch at 96 to 388 (ILNTLLVAVT…SLSILTSLFM (293 aa)) folds into the ABC transmembrane type-1 domain.

It belongs to the binding-protein-dependent transport system permease family. HisMQ subfamily.

It is found in the cell inner membrane. Functionally, part of a binding-protein-dependent transport system for L-amino acids, affects the uptake as well as efflux of these amino acids. Probably responsible for the translocation of the substrate across the membrane. The sequence is that of General L-amino acid transport system permease protein AapQ (aapQ) from Rhizobium johnstonii (strain DSM 114642 / LMG 32736 / 3841) (Rhizobium leguminosarum bv. viciae).